The chain runs to 796 residues: Protein translocase subunit SecA 2 (796 aa).

ATP-binding positions include Gln-84, 102-106 (GEGKT), and Asp-496.

It belongs to the SecA family. Monomer and homodimer. Part of the essential Sec protein translocation apparatus which comprises SecA, SecYEG and auxiliary proteins SecDF. Other proteins may also be involved.

It is found in the cell membrane. Its subcellular location is the cytoplasm. The enzyme catalyses ATP + H2O + cellular proteinSide 1 = ADP + phosphate + cellular proteinSide 2.. Part of the Sec protein translocase complex. Interacts with the SecYEG preprotein conducting channel. Has a central role in coupling the hydrolysis of ATP to the transfer of proteins into and across the cell membrane, serving as an ATP-driven molecular motor driving the stepwise translocation of polypeptide chains across the membrane. In Staphylococcus aureus (strain Mu3 / ATCC 700698), this protein is Protein translocase subunit SecA 2.